The primary structure comprises 453 residues: Growth/differentiation factor 9 (453 aa).

Residues 1–25 (MALPNKFFLWFCCFAWLCFPISLDS) form the signal peptide. A propeptide spanning residues 26–318 (QPSRGEAQIV…EGVRLSRHRR (293 aa)) is cleaved from the precursor. N-linked (GlcNAc...) asparagine glycosylation is found at Asn-106, Asn-163, Asn-236, Asn-255, and Asn-269. A disordered region spans residues 281 to 300 (SLHPKRKPSQDPDQKRGLSA). Asn-337 carries an N-linked (GlcNAc...) asparagine glycan. Intrachain disulfides connect Cys-352–Cys-418, Cys-381–Cys-450, and Cys-385–Cys-452.

It belongs to the TGF-beta family. In terms of assembly, homodimer or heterodimer (Potential). But, in contrast to other members of this family, cannot be disulfide-linked. Post-translationally, phosphorylated; phosphorylation is critical for GDF9 function.

The protein localises to the secreted. Its function is as follows. Required for ovarian folliculogenesis. The protein is Growth/differentiation factor 9 (GDF9) of Bos taurus (Bovine).